Consider the following 289-residue polypeptide: Phycobilisome 39 kDa linker polypeptide, phycocyanin-associated, rod (289 aa).

Positions 2–180 (PITSAASRLG…LYRGYANSDR (179 aa)) constitute a PBS-linker domain. The interval 213-233 (SYLPSKQGTAPSRTFGRSSQG) is disordered. The segment covering 216–233 (PSKQGTAPSRTFGRSSQG) has biased composition (polar residues). One can recognise a CpcD-like domain in the interval 236 to 288 (PRLYRIEVTGISLPRYPKVRRSNKEFIVPYEQLSSTLQQINKLGGKVASITFA).

This sequence belongs to the phycobilisome linker protein family.

It localises to the cellular thylakoid membrane. Its function is as follows. Rod linker protein, associated with phycocyanin. Linker polypeptides determine the state of aggregation and the location of the disk-shaped phycobiliprotein units within the phycobilisome and modulate their spectroscopic properties in order to mediate a directed and optimal energy transfer. This chain is Phycobilisome 39 kDa linker polypeptide, phycocyanin-associated, rod (cpcI2), found in Microchaete diplosiphon (Fremyella diplosiphon).